Here is a 185-residue protein sequence, read N- to C-terminus: Bcl-2-like protein 10 (185 aa).

A BH1 motif is present at residues 76–95; that stretch reads LSNDQEFNWGRLVMLLAFVG. The BH2 signature appears at 138 to 149; sequence WLEAHGGWDGFC. Residues 160-182 form a helical membrane-spanning segment; sequence FWRRLLIRAILSCFFATAIFYIW.

It belongs to the Bcl-2 family. Interacts with BAX. Interacts with BCL2, BCL2L1/BCLX. Interacts with APAF1. Interacts with ITPR1, ITPR2 and ITPR3; the interaction with ITPR1 is increased in the presence of AHCLY1. Interacts with AHCYL1. Interacts with HIP1R (via ENTH and I/LWEQ domains). Interacts with CASP9. Interacts with BCL2L11/BIM. Interacts with BIK. Interacts with UBQLN4. Interacts with NME2/NM23-H2. Interacts with and PMAIP1/NOXA. Interacts with TPX2. Interacts with UBQLN1; in the cytoplasm. Interacts (via BH1 domain) with BECN1. The cofactor is Ca(2+). Monoubiquitinated by UBQLN1; results in stabilization of BCL2L10 protein abundance and in relocalization from mitochondria to cytoplasm. As to expression, expressed in oligodendroglial lineage cells.

It is found in the mitochondrion. The protein localises to the nucleus membrane. Its subcellular location is the endoplasmic reticulum. It localises to the cytoplasm. The protein resides in the cytoskeleton. It is found in the spindle. Functionally, promotes cell survival by suppressing apoptosis induced by BAX but not BAK. Increases binding of AHCYL1/IRBIT to ITPR1. Reduces ITPR1-mediated calcium release from the endoplasmic reticulum cooperatively with AHCYL1/IRBIT under normal cellular conditions. Under apoptotic stress conditions, dissociates from ITPR1 and is displaced from mitochondria-associated endoplasmic reticulum membranes, leading to increased Ca(2+) transfer to mitochondria which promotes apoptosis. Required for the correct formation of the microtubule organizing center during oocyte cell division, potentially via regulation of protein abundance and localization of other microtubule organizing center components such as AURKA and TPX2. This Rattus norvegicus (Rat) protein is Bcl-2-like protein 10.